Consider the following 266-residue polypeptide: Undecaprenyl-diphosphatase (266 aa).

The next 8 membrane-spanning stretches (helical) occupy residues 1 to 21, 39 to 59, 83 to 103, 111 to 131, 144 to 164, 183 to 203, 218 to 238, and 246 to 266; these read MDTF…FLPI, QGLA…VLYF, SKLA…GFAL, LRGP…LWWA, TGWK…IPGT, AAAR…AILM, SLAL…HLFL, and MTPF…FIFM.

The protein belongs to the UppP family.

The protein localises to the cell inner membrane. The catalysed reaction is di-trans,octa-cis-undecaprenyl diphosphate + H2O = di-trans,octa-cis-undecaprenyl phosphate + phosphate + H(+). In terms of biological role, catalyzes the dephosphorylation of undecaprenyl diphosphate (UPP). Confers resistance to bacitracin. This is Undecaprenyl-diphosphatase from Shewanella woodyi (strain ATCC 51908 / MS32).